We begin with the raw amino-acid sequence, 440 residues long: Metacaspase-1 (440 aa).

Positions 1–134 are disordered; the sequence is MFPGSGRKTY…NPQGFGQNSG (134 aa). Pro residues predominate over residues 14–51; that stretch reads APPPGPPNGYQYGPPPGAQGQYPPPQGYPPQGYPPQGY. Over residues 52 to 81 the composition is skewed to low complexity; the sequence is PPQGYAPQGYPPQGYAPQGYAPQGYQQQGG. Over residues 82–94 the composition is skewed to gly residues; sequence QQQGGQQQGGQQQ. Over residues 98–110 the composition is skewed to polar residues; it reads RQTYATQEAQNFG. Catalysis depends on residues histidine 230 and cysteine 286.

It belongs to the peptidase C14B family.

Functionally, involved in cell death (apoptosis). In Debaryomyces hansenii (strain ATCC 36239 / CBS 767 / BCRC 21394 / JCM 1990 / NBRC 0083 / IGC 2968) (Yeast), this protein is Metacaspase-1 (MCA1).